The chain runs to 541 residues: T-complex protein 1 subunit epsilon (541 aa).

N-acetylalanine is present on Ala-2. Residue Lys-20 forms a Glycyl lysine isopeptide (Lys-Gly) (interchain with G-Cter in SUMO2) linkage. Ser-26 is modified (phosphoserine). Gly-53 is a binding site for ADP. Gly-53 contributes to the ATP binding site. Asp-104 lines the Mg(2+) pocket. Residues Gly-105, Thr-106, Thr-107, and Ser-175 each coordinate ADP. Thr-106 and Thr-107 together coordinate ATP. Residues Lys-210, Lys-214, Lys-265, Lys-275, and Lys-279 each participate in a glycyl lysine isopeptide (Lys-Gly) (interchain with G-Cter in SUMO2) cross-link. The residue at position 346 (Ser-346) is a Phosphoserine. Lys-392 is covalently cross-linked (Glycyl lysine isopeptide (Lys-Gly) (interchain with G-Cter in SUMO2)). ADP-binding residues include Gly-422, Asp-492, Glu-508, and Lys-513. An ATP-binding site is contributed by Gly-422. Ser-539 is modified (phosphoserine).

It belongs to the TCP-1 chaperonin family. In terms of assembly, component of the chaperonin-containing T-complex (TRiC), a hexadecamer composed of two identical back-to-back stacked rings enclosing a protein folding chamber. Each ring is made up of eight different subunits: TCP1/CCT1, CCT2, CCT3, CCT4, CCT5, CCT6A/CCT6, CCT7, CCT8. Interacts with PACRG. Interacts with DNAAF4. Interacts with DLEC1. Interacts with SPMAP2. Post-translationally, ubiquitinated by the DCX(DCAF12) complex specifically recognizes the diglutamate (Glu-Glu) at the C-terminus, leading to its degradation.

It localises to the cytoplasm. The protein resides in the cytoskeleton. It is found in the microtubule organizing center. Its subcellular location is the centrosome. It carries out the reaction ATP + H2O = ADP + phosphate + H(+). Its function is as follows. Component of the chaperonin-containing T-complex (TRiC), a molecular chaperone complex that assists the folding of actin, tubulin and other proteins upon ATP hydrolysis. The TRiC complex mediates the folding of WRAP53/TCAB1, thereby regulating telomere maintenance. As part of the TRiC complex may play a role in the assembly of BBSome, a complex involved in ciliogenesis regulating transports vesicles to the cilia. This chain is T-complex protein 1 subunit epsilon (CCT5), found in Homo sapiens (Human).